The sequence spans 163 residues: Small ribosomal subunit protein uS7 (163 aa).

This sequence belongs to the universal ribosomal protein uS7 family. As to quaternary structure, part of the 30S ribosomal subunit. Contacts proteins S9 and S11.

Its function is as follows. One of the primary rRNA binding proteins, it binds directly to 16S rRNA where it nucleates assembly of the head domain of the 30S subunit. Is located at the subunit interface close to the decoding center, probably blocks exit of the E-site tRNA. The sequence is that of Small ribosomal subunit protein uS7 from Rickettsia bellii (strain RML369-C).